The chain runs to 147 residues: Phosphoribosyl-AMP cyclohydrolase (147 aa).

Mg(2+) is bound at residue D89. Residue C90 coordinates Zn(2+). D91 and D93 together coordinate Mg(2+). Residues C106 and C113 each contribute to the Zn(2+) site.

The protein belongs to the PRA-CH family. In terms of assembly, homodimer. It depends on Mg(2+) as a cofactor. Zn(2+) serves as cofactor.

The protein resides in the cytoplasm. The enzyme catalyses 1-(5-phospho-beta-D-ribosyl)-5'-AMP + H2O = 1-(5-phospho-beta-D-ribosyl)-5-[(5-phospho-beta-D-ribosylamino)methylideneamino]imidazole-4-carboxamide. Its pathway is amino-acid biosynthesis; L-histidine biosynthesis; L-histidine from 5-phospho-alpha-D-ribose 1-diphosphate: step 3/9. In terms of biological role, catalyzes the hydrolysis of the adenine ring of phosphoribosyl-AMP. The protein is Phosphoribosyl-AMP cyclohydrolase of Nitrobacter hamburgensis (strain DSM 10229 / NCIMB 13809 / X14).